A 147-amino-acid polypeptide reads, in one-letter code: Peptide deformylase (147 aa).

Residues Cys-88 and His-130 each contribute to the Fe cation site. The active site involves Glu-131. His-134 is a binding site for Fe cation.

It belongs to the polypeptide deformylase family. Requires Fe(2+) as cofactor.

It catalyses the reaction N-terminal N-formyl-L-methionyl-[peptide] + H2O = N-terminal L-methionyl-[peptide] + formate. Its function is as follows. Removes the formyl group from the N-terminal Met of newly synthesized proteins. Requires at least a dipeptide for an efficient rate of reaction. N-terminal L-methionine is a prerequisite for activity but the enzyme has broad specificity at other positions. The protein is Peptide deformylase of Alkaliphilus metalliredigens (strain QYMF).